The chain runs to 291 residues: MKTLLILTILAMAITIATANMQADPSGQVQWPQQQPFLQPHQPFSQQPQQIFPQPQQTFPHQPQQQFPQPQQPQQQFLQPRQPFPQQPQQPYPQQPQQPFPQTQQPQQPFPQSKQPQQPFPQPQQPQQSFPQQQPSLIQQSLQQQLNPCKNFLLQQCKPVSLVSSLWSIILPPSDCQVMRQQCCQQLAQIPQQLQCAAIHSVVHSIIMQQEQQEQLQGVQILVPLSQQQQVGQGILVQGQGIIQPQQPAQLEVIRSLVLQTLPTMCNVYVPPYCSTIRAPFASIVASIGGQ.

The N-terminal stretch at 1 to 19 is a signal peptide; sequence MKTLLILTILAMAITIATA. Positions 38-81 are enriched in low complexity; the sequence is LQPHQPFSQQPQQIFPQPQQTFPHQPQQQFPQPQQPQQQFLQPR. Residues 38-137 form a disordered region; it reads LQPHQPFSQQ…QSFPQQQPSL (100 aa). A compositionally biased stretch (pro residues) spans 82 to 99; that stretch reads QPFPQQPQQPYPQQPQQP. 2 stretches are compositionally biased toward low complexity: residues 100–117 and 125–137; these read FPQT…KQPQ and QPQQ…QPSL.

The protein belongs to the gliadin/glutenin family.

Gliadin is the major seed storage protein in wheat. This chain is Gamma-gliadin B, found in Triticum aestivum (Wheat).